The primary structure comprises 271 residues: Phosphate import ATP-binding protein PstB 3 (271 aa).

The ABC transporter domain occupies 20–266; the sequence is LRVEGLGFYY…PQETQTRDYV (247 aa). 52 to 59 contributes to the ATP binding site; sequence GPSGCGKS.

It belongs to the ABC transporter superfamily. Phosphate importer (TC 3.A.1.7) family. The complex is composed of two ATP-binding proteins (PstB), two transmembrane proteins (PstC and PstA) and a solute-binding protein (PstS).

Its subcellular location is the cell inner membrane. It catalyses the reaction phosphate(out) + ATP + H2O = ADP + 2 phosphate(in) + H(+). Its function is as follows. Part of the ABC transporter complex PstSACB involved in phosphate import. Responsible for energy coupling to the transport system. This is Phosphate import ATP-binding protein PstB 3 from Synechocystis sp. (strain ATCC 27184 / PCC 6803 / Kazusa).